The primary structure comprises 169 residues: Peptide deformylase (169 aa).

Positions 91 and 133 each coordinate Fe cation. Residue E134 is part of the active site. Residue H137 coordinates Fe cation.

This sequence belongs to the polypeptide deformylase family. The cofactor is Fe(2+).

It carries out the reaction N-terminal N-formyl-L-methionyl-[peptide] + H2O = N-terminal L-methionyl-[peptide] + formate. In terms of biological role, removes the formyl group from the N-terminal Met of newly synthesized proteins. Requires at least a dipeptide for an efficient rate of reaction. N-terminal L-methionine is a prerequisite for activity but the enzyme has broad specificity at other positions. This Erwinia tasmaniensis (strain DSM 17950 / CFBP 7177 / CIP 109463 / NCPPB 4357 / Et1/99) protein is Peptide deformylase.